The sequence spans 332 residues: DnAJ-like protein slr0093 (332 aa).

Residues 6–75 (FKDYYQILGV…RQKYDQFGRY (70 aa)) form the J domain.

The sequence is that of DnAJ-like protein slr0093 from Synechocystis sp. (strain ATCC 27184 / PCC 6803 / Kazusa).